Consider the following 344-residue polypeptide: Small ribosomal subunit protein mS38 (344 aa).

Disordered stretches follow at residues 1–27 (MIPQ…ASSA), 43–101 (ALQK…SVPS), and 325–344 (KKYK…QDRL). A compositionally biased stretch (low complexity) spans 51 to 74 (SSKPSSPDDGSSRAFAARASVPAA). Residues 325–338 (KKYKKLMRRTRNER) are compositionally biased toward basic residues.

Belongs to the mitochondrion-specific ribosomal protein mS38 family. Component of the mitochondrial small ribosomal subunit (mt-SSU). Mature N.crassa 74S mitochondrial ribosomes consist of a small (37S) and a large (54S) subunit. The 37S small subunit contains a 16S ribosomal RNA (16S mt-rRNA) and 32 different proteins. The 54S large subunit contains a 23S rRNA (23S mt-rRNA) and 42 different proteins.

Its subcellular location is the mitochondrion. Component of the mitochondrial ribosome (mitoribosome), a dedicated translation machinery responsible for the synthesis of mitochondrial genome-encoded proteins, including at least some of the essential transmembrane subunits of the mitochondrial respiratory chain. The mitoribosomes are attached to the mitochondrial inner membrane and translation products are cotranslationally integrated into the membrane. This is Small ribosomal subunit protein mS38 (cox24) from Neurospora crassa (strain ATCC 24698 / 74-OR23-1A / CBS 708.71 / DSM 1257 / FGSC 987).